The following is a 315-amino-acid chain: Deoxyhypusine hydroxylase (315 aa).

HEAT-like PBS-type repeat units follow at residues 23 to 52, 56 to 82, 89 to 115, 179 to 205, 211 to 237, and 244 to 270; these read IAKR…LNDK, LRHE…LVKN, VRHE…YSND, NRYR…GLKD, LRHE…CVLD, and VRHE…LLQD. Positions 58, 91, and 92 each coordinate Fe cation. Fe cation contacts are provided by H213, H246, and E247.

This sequence belongs to the deoxyhypusine hydroxylase family. Fe(2+) serves as cofactor.

The catalysed reaction is [eIF5A protein]-deoxyhypusine + AH2 + O2 = [eIF5A protein]-hypusine + A + H2O. It functions in the pathway protein modification; eIF5A hypusination. In terms of biological role, catalyzes the hydroxylation of the N(6)-(4-aminobutyl)-L-lysine intermediate produced by deoxyhypusine synthase/DHPS on a critical lysine of the eukaryotic translation initiation factor 5A/eIF-5A. This is the second step of the post-translational modification of that lysine into an unusual amino acid residue named hypusine. Hypusination is unique to mature eIF-5A factor and is essential for its function. This Dictyostelium discoideum (Social amoeba) protein is Deoxyhypusine hydroxylase (dohh-1).